A 681-amino-acid chain; its full sequence is PTS system glucose-specific EIICBA component (681 aa).

Positions 3-414 (KKLFGQLQRI…LKYKTPGRED (412 aa)) constitute a PTS EIIC type-1 domain. 10 consecutive transmembrane segments (helical) span residues 16-36 (LMLPVAILPAAGLLLAIGTAI), 73-93 (MIFALGVAIGLAGGDGVAAIA), 126-146 (ILGIPTLQTGVFGGIIIGALA), 170-190 (FVPIMMATTSFILAFPMALIW), 199-219 (AFSTGLLDSNTGVAVFLFGFI), 273-293 (FMQGEFPVMMFGLPAAALAIY), 303-323 (VVAGLMGSAALTSFLTGITEP), 328-348 (FLFVAPLLFFIHAVLDGLSFL), 355-375 (VHLGYTFSGGFIDYVLLGVLP), and 383-403 (VIPVGLVYAVIYYFVFRFLIV). A PTS EIIB type-1 domain is found at 425 to 506 (TELPYAVLEA…QQIMNGQVVE (82 aa)). Residue C447 is the Phosphocysteine intermediate; for EIIB activity of the active site. The PTS EIIA type-1 domain occupies 551 to 655 (DQVFSEKMMG…SDITPIIVTQ (105 aa)). The Tele-phosphohistidine intermediate; for EIIA activity role is filled by H603.

It is found in the cell membrane. The enzyme catalyses N(pros)-phospho-L-histidyl-[protein] + D-glucose(out) = D-glucose 6-phosphate(in) + L-histidyl-[protein]. In terms of biological role, the phosphoenolpyruvate-dependent sugar phosphotransferase system (sugar PTS), a major carbohydrate active transport system, catalyzes the phosphorylation of incoming sugar substrates concomitantly with their translocation across the cell membrane. This system is involved in glucose transport. This chain is PTS system glucose-specific EIICBA component (ptsG), found in Staphylococcus aureus (strain JH9).